We begin with the raw amino-acid sequence, 171 residues long: Shikimate kinase (171 aa).

14–19 (GAGKST) provides a ligand contact to ATP. Ser18 is a Mg(2+) binding site. 3 residues coordinate substrate: Asp36, Arg60, and Gly82. Arg120 contacts ATP. Arg139 is a substrate binding site. Gln156 is a binding site for ATP.

The protein belongs to the shikimate kinase family. In terms of assembly, monomer. The cofactor is Mg(2+).

Its subcellular location is the cytoplasm. The enzyme catalyses shikimate + ATP = 3-phosphoshikimate + ADP + H(+). It participates in metabolic intermediate biosynthesis; chorismate biosynthesis; chorismate from D-erythrose 4-phosphate and phosphoenolpyruvate: step 5/7. Its function is as follows. Catalyzes the specific phosphorylation of the 3-hydroxyl group of shikimic acid using ATP as a cosubstrate. The chain is Shikimate kinase from Shewanella pealeana (strain ATCC 700345 / ANG-SQ1).